The chain runs to 309 residues: NAD kinase (309 aa).

Aspartate 89 serves as the catalytic Proton acceptor. NAD(+)-binding positions include 89-90 (DG), 163-164 (NE), histidine 174, arginine 191, aspartate 193, and 204-209 (TAYALS).

It belongs to the NAD kinase family. Requires a divalent metal cation as cofactor.

It localises to the cytoplasm. The enzyme catalyses NAD(+) + ATP = ADP + NADP(+) + H(+). Functionally, involved in the regulation of the intracellular balance of NAD and NADP, and is a key enzyme in the biosynthesis of NADP. Catalyzes specifically the phosphorylation on 2'-hydroxyl of the adenosine moiety of NAD to yield NADP. The protein is NAD kinase of Shewanella sp. (strain ANA-3).